A 193-amino-acid chain; its full sequence is Xanthine phosphoribosyltransferase (193 aa).

Xanthine is bound by residues Leu20 and Asn27. 129–133 contacts 5-phospho-alpha-D-ribose 1-diphosphate; it reads ANGKA. Xanthine is bound at residue Lys157.

It belongs to the purine/pyrimidine phosphoribosyltransferase family. Xpt subfamily. Homodimer.

It is found in the cytoplasm. It carries out the reaction XMP + diphosphate = xanthine + 5-phospho-alpha-D-ribose 1-diphosphate. It functions in the pathway purine metabolism; XMP biosynthesis via salvage pathway; XMP from xanthine: step 1/1. Its function is as follows. Converts the preformed base xanthine, a product of nucleic acid breakdown, to xanthosine 5'-monophosphate (XMP), so it can be reused for RNA or DNA synthesis. The sequence is that of Xanthine phosphoribosyltransferase from Bifidobacterium longum subsp. infantis (strain ATCC 15697 / DSM 20088 / JCM 1222 / NCTC 11817 / S12).